The sequence spans 432 residues: Transcriptional adapter 3 (432 aa).

Residue K21 forms a Glycyl lysine isopeptide (Lys-Gly) (interchain with G-Cter in SUMO2) linkage. A coiled-coil region spans residues I40–Q69. A disordered region spans residues G87–Q127. K129 is covalently cross-linked (Glycyl lysine isopeptide (Lys-Gly) (interchain with G-Cter in SUMO2)). 2 stretches are compositionally biased toward basic and acidic residues: residues D211–K223 and L232–P251. 2 disordered regions span residues D211–F257 and E271–K319. 2 positions are modified to phosphoserine: S280 and S298. Residues A295–P305 are compositionally biased toward polar residues. Positions L367 to T407 form a coiled coil. K418 is subject to N6-acetyllysine.

This sequence belongs to the NGG1 family. In terms of assembly, the PCAF complex is composed of a number of TBP-associated factors (TAFS), such as TAF5, TAF5L, TAF6, TAF6L, TAF9, TAF10 and TAF12, PCAF, and also PCAF-associated factors (PAFs), such as TADA2L/ADA2, TADA3L/ADA3 and SPT3. Interacts directly with TADA2L and PCAF and also with the high-risk HPV oncoprotein E6. Component of the STAGA transcription coactivator-HAT complex, at least composed of SUPT3H, GCN5L2, TAF5L, TAF6L, SUPT7L, TADA3L, TAD1L, TAF10, TAF12, TRRAP and TAF9. Component of the TFTC-HAT complex. Component of the ADA2A-containing complex (ATAC), composed of KAT14, KAT2A, TADA2L, TADA3L, ZZ3, MBIP, WDR5, YEATS2, CCDC101 and DR1.

Its subcellular location is the nucleus. In terms of biological role, functions as a component of the PCAF complex. The PCAF complex is capable of efficiently acetylating histones in a nucleosomal context. The PCAF complex could be considered as the human version of the yeast SAGA complex. Also known as a coactivator for p53/TP53-dependent transcriptional activation. Component of the ATAC complex, a complex with histone acetyltransferase activity on histones H3 and H4. The sequence is that of Transcriptional adapter 3 (TADA3) from Pongo abelii (Sumatran orangutan).